The sequence spans 185 residues: Ribosome-recycling factor (185 aa).

The protein belongs to the RRF family.

It is found in the cytoplasm. Its function is as follows. Responsible for the release of ribosomes from messenger RNA at the termination of protein biosynthesis. May increase the efficiency of translation by recycling ribosomes from one round of translation to another. In Streptococcus pyogenes serotype M18 (strain MGAS8232), this protein is Ribosome-recycling factor.